A 275-amino-acid chain; its full sequence is Large ribosomal subunit protein uL2cz (275 aa).

2 disordered regions span residues 1–22 and 226–275; these read MAIH…DSQV and NPVD…RRRK.

Belongs to the universal ribosomal protein uL2 family. Part of the 50S ribosomal subunit.

It localises to the plastid. The protein resides in the chloroplast. The polypeptide is Large ribosomal subunit protein uL2cz (rpl2-A) (Chloranthus spicatus (Chulantree)).